The primary structure comprises 118 residues: MLEKVLKRKNALRAKRKLRVRGKIFGTAQKPRVSLFRSNRYLYAQAINDESGLTLASVDGKKLGLGNNKEEAKKIAASFAASLQEAGIKEVVFDRNGYLYHGVVASFADSLRENGIGL.

The protein belongs to the universal ribosomal protein uL18 family. In terms of assembly, part of the 50S ribosomal subunit; part of the 5S rRNA/L5/L18/L25 subcomplex. Contacts the 5S and 23S rRNAs.

Functionally, this is one of the proteins that bind and probably mediate the attachment of the 5S RNA into the large ribosomal subunit, where it forms part of the central protuberance. This is Large ribosomal subunit protein uL18 from Wolinella succinogenes (strain ATCC 29543 / DSM 1740 / CCUG 13145 / JCM 31913 / LMG 7466 / NCTC 11488 / FDC 602W) (Vibrio succinogenes).